A 347-amino-acid polypeptide reads, in one-letter code: Protease HtpX homolog (347 aa).

Helical transmembrane passes span valine 8–alanine 28, alanine 44–valine 64, leucine 76–alanine 96, and alanine 141–threonine 163. Histidine 174 serves as a coordination point for Zn(2+). Glutamate 175 is a catalytic residue. Histidine 178 contacts Zn(2+). 2 consecutive transmembrane segments (helical) span residues alanine 185 to valine 205 and isoleucine 221 to leucine 241. Glutamate 248 provides a ligand contact to Zn(2+).

It belongs to the peptidase M48B family. It depends on Zn(2+) as a cofactor.

The protein resides in the cell membrane. In Pyrobaculum aerophilum (strain ATCC 51768 / DSM 7523 / JCM 9630 / CIP 104966 / NBRC 100827 / IM2), this protein is Protease HtpX homolog.